A 357-amino-acid polypeptide reads, in one-letter code: Phosphoribosylformylglycinamidine cyclo-ligase (357 aa).

Belongs to the AIR synthase family.

The protein localises to the cytoplasm. The enzyme catalyses 2-formamido-N(1)-(5-O-phospho-beta-D-ribosyl)acetamidine + ATP = 5-amino-1-(5-phospho-beta-D-ribosyl)imidazole + ADP + phosphate + H(+). It functions in the pathway purine metabolism; IMP biosynthesis via de novo pathway; 5-amino-1-(5-phospho-D-ribosyl)imidazole from N(2)-formyl-N(1)-(5-phospho-D-ribosyl)glycinamide: step 2/2. The polypeptide is Phosphoribosylformylglycinamidine cyclo-ligase (Nitrobacter winogradskyi (strain ATCC 25391 / DSM 10237 / CIP 104748 / NCIMB 11846 / Nb-255)).